A 455-amino-acid chain; its full sequence is Protein png1 (455 aa).

A disordered region spans residues 1–110 (MTDGRQQHTR…LPVFPSPPRD (110 aa)). The segment covering 38-53 (SLQEQSRSRSRTQSPS) has biased composition (low complexity). Positions 59–73 (HTPPHPSRAPPPPPT) are enriched in pro residues. The segment covering 74-98 (GAHYPSSQSPSQQHQQHQLPASSSL) has biased composition (low complexity). Zn(2+) contacts are provided by cysteine 199, cysteine 202, cysteine 231, and cysteine 236. The segment at 408 to 455 (NLIPREQTSGRPGEQKTPASMQDTPVDWVAAQQMGPGQSGPDRSQDGR) is disordered.

This sequence belongs to the transglutaminase-like superfamily. PNGase family.

The chain is Protein png1 (png1) from Aspergillus fumigatus (strain ATCC MYA-4609 / CBS 101355 / FGSC A1100 / Af293) (Neosartorya fumigata).